A 277-amino-acid polypeptide reads, in one-letter code: Endochitinase CHI (277 aa).

An N-terminal signal peptide occupies residues 1–31 (MAKPTSRNDRFALFFITLIFLILTVSKPVAS). The Chitin-binding type-1 domain maps to 32 to 66 (QNCGCASDFCCSKYGYCGTTDEFCGEGCQAGPCRS). Disulfide bonds link cysteine 34–cysteine 42, cysteine 36–cysteine 48, cysteine 41–cysteine 55, and cysteine 59–cysteine 64. Residues 75–277 (VSLEGTVTPD…GVAPGDNLTC (203 aa)) are catalytic. Glutamate 136 (proton donor) is an active-site residue. An N-linked (GlcNAc...) asparagine glycan is attached at asparagine 274.

This sequence belongs to the glycosyl hydrolase 19 family. Chitinase class I subfamily.

The catalysed reaction is Random endo-hydrolysis of N-acetyl-beta-D-glucosaminide (1-&gt;4)-beta-linkages in chitin and chitodextrins.. This Arabidopsis thaliana (Mouse-ear cress) protein is Endochitinase CHI.